We begin with the raw amino-acid sequence, 389 residues long: (2R)-sulfolactate sulfo-lyase subunit beta (389 aa).

This sequence belongs to the UxaA family. (2R)-sulfolactate sulfo-lyase is composed of a SuyA and a SuyB subunit.

Its subcellular location is the cytoplasm. It catalyses the reaction (2R)-3-sulfolactate = sulfite + pyruvate + H(+). Functionally, together with SuyA, desulfonates sulfolactate to pyruvate and sulfite. This is (2R)-sulfolactate sulfo-lyase subunit beta (suyB) from Chromohalobacter salexigens (strain ATCC BAA-138 / DSM 3043 / CIP 106854 / NCIMB 13768 / 1H11).